Here is a 207-residue protein sequence, read N- to C-terminus: Probable HTH-type transcriptional regulator YttP (207 aa).

Positions V3–Y63 constitute an HTH tetR-type domain. Positions S26–F45 form a DNA-binding region, H-T-H motif.

The sequence is that of Probable HTH-type transcriptional regulator YttP (yttP) from Bacillus subtilis (strain 168).